An 826-amino-acid polypeptide reads, in one-letter code: Leucine--tRNA ligase (826 aa).

Residues 42-52 (PYPSGNLHMGH) carry the 'HIGH' region motif. Positions 581–585 (KMSKS) match the 'KMSKS' region motif. K584 is an ATP binding site.

This sequence belongs to the class-I aminoacyl-tRNA synthetase family.

Its subcellular location is the cytoplasm. The enzyme catalyses tRNA(Leu) + L-leucine + ATP = L-leucyl-tRNA(Leu) + AMP + diphosphate. The chain is Leucine--tRNA ligase from Desulforudis audaxviator (strain MP104C).